The following is a 144-amino-acid chain: Nucleoside diphosphate kinase (144 aa).

Positions 11, 59, 87, 93, 104, and 114 each coordinate ATP. Histidine 117 acts as the Pros-phosphohistidine intermediate in catalysis.

Belongs to the NDK family. As to quaternary structure, homotetramer. It depends on Mg(2+) as a cofactor.

Its subcellular location is the cytoplasm. It catalyses the reaction a 2'-deoxyribonucleoside 5'-diphosphate + ATP = a 2'-deoxyribonucleoside 5'-triphosphate + ADP. It carries out the reaction a ribonucleoside 5'-diphosphate + ATP = a ribonucleoside 5'-triphosphate + ADP. In terms of biological role, major role in the synthesis of nucleoside triphosphates other than ATP. The ATP gamma phosphate is transferred to the NDP beta phosphate via a ping-pong mechanism, using a phosphorylated active-site intermediate. The protein is Nucleoside diphosphate kinase of Aliivibrio fischeri (strain MJ11) (Vibrio fischeri).